A 546-amino-acid chain; its full sequence is Alpha-isocomene synthase (546 aa).

Positions 299, 303, 443, and 451 each coordinate Mg(2+). A DDXXD motif motif is present at residues 299 to 303 (DDTYD).

Belongs to the terpene synthase family. Tpsa subfamily. The cofactor is Mg(2+). It depends on Mn(2+) as a cofactor. Highly expressed in roots, lower levels in stems and leaves and detected in disk florets, but not in ray florets.

The catalysed reaction is (2E,6E)-farnesyl diphosphate = (-)-alpha-isocomene + diphosphate. The protein operates within secondary metabolite biosynthesis; terpenoid biosynthesis. Sesquiterpene synthase involved in the biosynthesis of alpha-isocomene as the major product and detectable amounts of beta-caryophyllene, beta-isocomene, silphinene and modeph-2-ene. Produces exclusively the (-)-(E)-beta caryophyllene enantiomer. The chain is Alpha-isocomene synthase from Matricaria chamomilla var. recutita (German chamomile).